We begin with the raw amino-acid sequence, 438 residues long: V-type ATP synthase beta chain (438 aa).

It belongs to the ATPase alpha/beta chains family.

Its function is as follows. Produces ATP from ADP in the presence of a proton gradient across the membrane. The V-type beta chain is a regulatory subunit. This chain is V-type ATP synthase beta chain (atpB), found in Chlamydia muridarum (strain MoPn / Nigg).